Here is a 264-residue protein sequence, read N- to C-terminus: V-type proton ATPase subunit D (264 aa).

A compositionally biased stretch (basic and acidic residues) spans 214–230 (RDNAETDAQMKAKKAEQ). A disordered region spans residues 214–264 (RDNAETDAQMKAKKAEQQRLALADSENAEGEQTENTPADILAAEEDEDVIF). The segment covering 255-264 (AAEEDEDVIF) has biased composition (acidic residues).

The protein belongs to the V-ATPase D subunit family. As to quaternary structure, V-ATPase is a heteromultimeric enzyme composed of a peripheral catalytic V1 complex (components A to H) attached to an integral membrane V0 proton pore complex (components: a, c, c', c'', d, e, f and VOA1).

The protein localises to the vacuole membrane. In terms of biological role, subunit of the V1 complex of vacuolar(H+)-ATPase (V-ATPase), a multisubunit enzyme composed of a peripheral complex (V1) that hydrolyzes ATP and a membrane integral complex (V0) that translocates protons. V-ATPase is responsible for acidifying and maintaining the pH of intracellular compartments. In Neurospora crassa (strain ATCC 24698 / 74-OR23-1A / CBS 708.71 / DSM 1257 / FGSC 987), this protein is V-type proton ATPase subunit D (vma-8).